The following is a 680-amino-acid chain: DNA-directed RNA polymerase subunit beta' (680 aa).

Zn(2+) contacts are provided by cysteine 69, cysteine 71, cysteine 87, and cysteine 90. Mg(2+) is bound by residues aspartate 489, aspartate 491, and aspartate 493.

This sequence belongs to the RNA polymerase beta' chain family. RpoC1 subfamily. As to quaternary structure, in plastids the minimal PEP RNA polymerase catalytic core is composed of four subunits: alpha, beta, beta', and beta''. When a (nuclear-encoded) sigma factor is associated with the core the holoenzyme is formed, which can initiate transcription. Mg(2+) serves as cofactor. Zn(2+) is required as a cofactor.

It localises to the plastid. The protein localises to the chloroplast. The catalysed reaction is RNA(n) + a ribonucleoside 5'-triphosphate = RNA(n+1) + diphosphate. DNA-dependent RNA polymerase catalyzes the transcription of DNA into RNA using the four ribonucleoside triphosphates as substrates. This chain is DNA-directed RNA polymerase subunit beta', found in Capsella bursa-pastoris (Shepherd's purse).